We begin with the raw amino-acid sequence, 398 residues long: Cholinephosphotransferase 1 (398 aa).

Position 2 is an N-acetylalanine (alanine 2). Topologically, residues 2–62 are cytoplasmic; sequence AAGAGARPAP…LLQWIPLWMA (61 aa). The helical transmembrane segment at 63-83 threads the bilayer; it reads PNTITLIGLAINLVTTLVLIF. Asparagine 64 lines the CDP-choline pocket. Residues 84 to 93 lie on the Lumenal side of the membrane; the sequence is YCPTVTEEAP. The chain crosses the membrane as a helical span at residues 94–118; that stretch reads YWTYLLCALGLFIYQSLDAIDGKQA. Mg(2+) contacts are provided by aspartate 111 and aspartate 114. Arginine 119 provides a ligand contact to CDP-choline. Residues 119–125 are Cytoplasmic-facing; the sequence is RRTNSCS. A helical transmembrane segment spans residues 126-150; that stretch reads PLGELFDHGCDSLSTVFMAIGASIA. Aspartate 132 provides a ligand contact to Mg(2+). The active-site Proton acceptor is histidine 133. Aspartate 136 provides a ligand contact to Mg(2+). The Lumenal segment spans residues 151–160; the sequence is VRLGTHPDWL. The helical transmembrane segment at 161 to 179 threads the bilayer; that stretch reads FFCSFVGMFMFYCAHWQTY. Topologically, residues 180–190 are cytoplasmic; sequence VSGVLRFGRVD. Residues 191–207 traverse the membrane as a helical segment; the sequence is VTEIQVALVIVFMLSTF. Residues 208-222 are Lumenal-facing; that stretch reads GGATMWDYTIPILEI. A helical transmembrane segment spans residues 223-248; that stretch reads KLKIVPVLGVVGGLIFSCSNYFHVIL. Residues 249–265 lie on the Cytoplasmic side of the membrane; that stretch reads HGGVGKNGSTIAGTSVL. A helical membrane pass occupies residues 266–281; the sequence is SPGLHIGLIIILAIMI. At 282-293 the chain is on the lumenal side; that stretch reads YKKSATNMFEKH. A helical membrane pass occupies residues 294–316; the sequence is PCLYTLMFGCVFAKVAQKLVIAH. At 317 to 329 the chain is on the cytoplasmic side; sequence MTKSELYLQDTVF. Residues 330–339 traverse the membrane as a helical segment; it reads IGPGLLFLDQ. Topologically, residues 340 to 346 are lumenal; the sequence is YFNNFID. The chain crosses the membrane as a helical span at residues 347–376; the sequence is EYVVLWIAMVISSFDMMIYFTSLCLQISRH. The Cytoplasmic segment spans residues 377-398; it reads LHLNIFKTSCQQAPEQVYKHID.

The protein belongs to the CDP-alcohol phosphatidyltransferase class-I family. Mg(2+) serves as cofactor. Mn(2+) is required as a cofactor. As to expression, expressed in brain, heart, lung, liver, spleen, intestine and muscle. Down-regulated in kidney of type 2 diabetic KK/Ta mice.

Its subcellular location is the golgi apparatus membrane. The catalysed reaction is CDP-choline + a 1,2-diacyl-sn-glycerol = a 1,2-diacyl-sn-glycero-3-phosphocholine + CMP + H(+). The enzyme catalyses 1-octadecanoyl-2-(5Z,8Z,11Z,14Z-eicosatetraenoyl)-sn-glycerol + CDP-choline = 1-octadecanoyl-2-(5Z,8Z,11Z,14Z-eicosatetraenoyl)-sn-glycero-3-phosphocholine + CMP + H(+). It carries out the reaction 1-hexadecanoyl-2-(9Z-octadecenoyl)-sn-glycerol + CDP-choline = 1-hexadecanoyl-2-(9Z-octadecenoyl)-sn-glycero-3-phosphocholine + CMP + H(+). It catalyses the reaction 1-hexadecanoyl-2-(4Z,7Z,10Z,13Z,16Z,19Z-docosahexaenoyl)-sn-glycerol + CDP-choline = 1-hexadecanoyl-2-(4Z,7Z,10Z,13Z,16Z,19Z-docosahexaenoyl)-sn-glycero-3-phosphocholine + CMP + H(+). The catalysed reaction is 1,2-dioctanoyl-sn-glycerol + CDP-choline = 1,2-dioctanoyl-sn-glycero-3-phosphocholine + CMP + H(+). It participates in phospholipid metabolism; phosphatidylcholine biosynthesis; phosphatidylcholine from phosphocholine: step 2/2. Functionally, catalyzes the final step of de novo phosphatidylcholine (PC) synthesis, i.e. the transfer of choline phosphate from CDP-choline to the free hydroxyl of a diacylglycerol (DAG), producing a PC. It thereby plays a central role in the formation and maintenance of vesicular membranes. This Mus musculus (Mouse) protein is Cholinephosphotransferase 1.